A 254-amino-acid polypeptide reads, in one-letter code: 3-deoxy-manno-octulosonate cytidylyltransferase (254 aa).

It belongs to the KdsB family.

Its subcellular location is the cytoplasm. The catalysed reaction is 3-deoxy-alpha-D-manno-oct-2-ulosonate + CTP = CMP-3-deoxy-beta-D-manno-octulosonate + diphosphate. The protein operates within nucleotide-sugar biosynthesis; CMP-3-deoxy-D-manno-octulosonate biosynthesis; CMP-3-deoxy-D-manno-octulosonate from 3-deoxy-D-manno-octulosonate and CTP: step 1/1. Its pathway is bacterial outer membrane biogenesis; lipopolysaccharide biosynthesis. In terms of biological role, activates KDO (a required 8-carbon sugar) for incorporation into bacterial lipopolysaccharide in Gram-negative bacteria. The chain is 3-deoxy-manno-octulosonate cytidylyltransferase from Chlamydia caviae (strain ATCC VR-813 / DSM 19441 / 03DC25 / GPIC) (Chlamydophila caviae).